Here is a 353-residue protein sequence, read N- to C-terminus: Very-long-chain 3-oxoacyl-CoA reductase (353 aa).

The chain crosses the membrane as a helical span at residues 33–53 (AAWALIAAGGFFVISRALLFG). Residues V78, D133, D141, N160, Y227, K231, I260, and S262 each coordinate NADP(+). The active-site Proton donor is the Y227. Catalysis depends on K231, which acts as the Lowers pKa of active site Tyr.

It belongs to the short-chain dehydrogenases/reductases (SDR) family.

Its subcellular location is the endoplasmic reticulum membrane. The catalysed reaction is a very-long-chain (3R)-3-hydroxyacyl-CoA + NADP(+) = a very-long-chain 3-oxoacyl-CoA + NADPH + H(+). Its pathway is lipid metabolism; fatty acid biosynthesis. Its function is as follows. Component of the microsomal membrane bound fatty acid elongation system, which produces the 26-carbon very long-chain fatty acids (VLCFA) from palmitate. Catalyzes the reduction of the 3-ketoacyl-CoA intermediate that is formed in each cycle of fatty acid elongation. VLCFAs serve as precursors for ceramide and sphingolipids. This Aspergillus terreus (strain NIH 2624 / FGSC A1156) protein is Very-long-chain 3-oxoacyl-CoA reductase.